Consider the following 356-residue polypeptide: Protein RecA (356 aa).

67–74 (GPESSGKT) is an ATP binding site.

Belongs to the RecA family.

It localises to the cytoplasm. Functionally, can catalyze the hydrolysis of ATP in the presence of single-stranded DNA, the ATP-dependent uptake of single-stranded DNA by duplex DNA, and the ATP-dependent hybridization of homologous single-stranded DNAs. It interacts with LexA causing its activation and leading to its autocatalytic cleavage. The polypeptide is Protein RecA (Yersinia pestis (strain Pestoides F)).